The chain runs to 218 residues: Putative transposase InsD for insertion element IS2E (218 aa).

Residues 23-206 form the Integrase catalytic domain; sequence KPAVPPSKRA…SPREYLRQRA (184 aa).

Functionally, involved in the transposition of the insertion sequence IS2. This chain is Putative transposase InsD for insertion element IS2E (insD8), found in Escherichia coli (strain K12).